Reading from the N-terminus, the 1505-residue chain is Myosin-6 (1505 aa).

In terms of domain architecture, Myosin N-terminal SH3-like spans 8–57 (SVGSFVWVEDPDEAWIDGEVVQVNGDEIKVLCTSGKHVVTKISNAYPKDV). The Myosin motor domain maps to 62-731 (SGVDDMTRLA…QMADLDTRRT (670 aa)). ATP contacts are provided by residues 156-163 (GESGAGKT) and 209-217 (NNNSSRFGK). 4 actin-binding regions span residues 495–529 (LIEK…YQTF), 531–554 (THKR…AGDV), 589–612 (FPPM…KQQL), and 612–634 (LVSL…KPNN). 6 IQ domains span residues 734-763 (LGRS…SAKQ), 757-786 (LRNS…EAAA), 782-811 (REAA…AAVS), 805-834 (LYSA…TKAA), 830-859 (QTKA…AAIT), and 853-882 (LKKA…AARE). Positions 883-1048 (TGALQAAKNK…AEKKIMHQQT (166 aa)) form a coiled coil. A Dilute domain is found at 1148-1452 (DRLIQMIGSA…ISSMRTLMTE (305 aa)).

The protein belongs to the TRAFAC class myosin-kinesin ATPase superfamily. Myosin family. Plant myosin class XI subfamily. As to quaternary structure, homodimer. Interacts with RABC2A and RABD1. As to expression, expressed in flowers, leaves, roots and stems.

It is found in the cytoplasm. Functionally, myosin heavy chain that is required for the cell cycle-regulated transport of various organelles and proteins for their segregation. Functions by binding with its tail domain to receptor proteins on organelles and exerting force with its N-terminal motor domain against actin filaments, thereby transporting its cargo along polarized actin cables. Involved in the tip growth of root hair cells. Plays a major role in trafficking of Golgi stacks, mitochondria and peroxisomes during root hair development. Targets the peroxisome through an interaction with RABC2A. Required for development of pavement cells, trichomes, and stigmatic papillae. This Arabidopsis thaliana (Mouse-ear cress) protein is Myosin-6 (XI-2).